The sequence spans 199 residues: FMN-dependent NADH:quinone oxidoreductase 2 (199 aa).

FMN-binding positions include serine 10, 16–18, and 96–99; these read SVS and MYNF.

Belongs to the azoreductase type 1 family. In terms of assembly, homodimer. FMN is required as a cofactor.

It carries out the reaction 2 a quinone + NADH + H(+) = 2 a 1,4-benzosemiquinone + NAD(+). It catalyses the reaction N,N-dimethyl-1,4-phenylenediamine + anthranilate + 2 NAD(+) = 2-(4-dimethylaminophenyl)diazenylbenzoate + 2 NADH + 2 H(+). In terms of biological role, quinone reductase that provides resistance to thiol-specific stress caused by electrophilic quinones. Functionally, also exhibits azoreductase activity. Catalyzes the reductive cleavage of the azo bond in aromatic azo compounds to the corresponding amines. The sequence is that of FMN-dependent NADH:quinone oxidoreductase 2 from Pseudomonas putida (strain ATCC 47054 / DSM 6125 / CFBP 8728 / NCIMB 11950 / KT2440).